The following is a 269-amino-acid chain: UPF0354 protein YtpQ (269 aa).

The protein belongs to the UPF0354 family.

This chain is UPF0354 protein YtpQ (ytpQ), found in Bacillus subtilis (strain 168).